Here is a 207-residue protein sequence, read N- to C-terminus: Large ribosomal subunit protein uL4 (207 aa).

The segment at 47-78 (GTASSKTRAEVRGGGKKPWRQKGTGRARVGSS) is disordered. Residues 60–71 (GGKKPWRQKGTG) show a composition bias toward basic residues.

The protein belongs to the universal ribosomal protein uL4 family. In terms of assembly, part of the 50S ribosomal subunit.

In terms of biological role, one of the primary rRNA binding proteins, this protein initially binds near the 5'-end of the 23S rRNA. It is important during the early stages of 50S assembly. It makes multiple contacts with different domains of the 23S rRNA in the assembled 50S subunit and ribosome. Forms part of the polypeptide exit tunnel. This chain is Large ribosomal subunit protein uL4, found in Syntrophomonas wolfei subsp. wolfei (strain DSM 2245B / Goettingen).